The following is a 487-amino-acid chain: UDP-N-acetylmuramate--L-alanine ligase (487 aa).

129–135 (GTHGKTT) is an ATP binding site.

This sequence belongs to the MurCDEF family.

The protein resides in the cytoplasm. The catalysed reaction is UDP-N-acetyl-alpha-D-muramate + L-alanine + ATP = UDP-N-acetyl-alpha-D-muramoyl-L-alanine + ADP + phosphate + H(+). It participates in cell wall biogenesis; peptidoglycan biosynthesis. Cell wall formation. The sequence is that of UDP-N-acetylmuramate--L-alanine ligase from Aliivibrio salmonicida (strain LFI1238) (Vibrio salmonicida (strain LFI1238)).